The following is a 491-amino-acid chain: Ran-binding protein 3 (491 aa).

Positions 1-10 (MADLANEEKP) are enriched in basic and acidic residues. 2 disordered regions span residues 1–177 (MADL…HCEE) and 255–292 (VLSP…KKES). Ala2 carries the post-translational modification N-acetylalanine. N6-acetyllysine is present on residues Lys9 and Lys21. 3 positions are modified to phosphoserine: Ser32, Ser33, and Ser40. The Nuclear localization signal motif lies at 49–57 (PPVKRERTS). Positions 51–67 (VKRERTSSLTHSEEKSS) are enriched in basic and acidic residues. Phosphothreonine is present on Thr56. Ser58 is modified (phosphoserine). Polar residues-rich tracts occupy residues 111–124 (VLSQ…TNGV) and 133–149 (PATS…SPSE). Ser146 carries the phosphoserine modification. Positions 152–162 (EETHTLEEKVP) are enriched in basic and acidic residues. A phosphoserine mark is found at Ser257, Ser277, Ser279, and Ser296. A compositionally biased stretch (low complexity) spans 275–286 (AQSGSESSSQEA). The 141-residue stretch at 302 to 442 (KATAWTCLLE…LALRSRAEQE (141 aa)) folds into the RanBD1 domain. The segment at 438–491 (RAEQEQEAKAPPPEPGATRATEEEDSDEDAVLAPSGVTGAGTGDEGDGQAPGST) is disordered. Position 463 is a phosphoserine (Ser463).

In terms of assembly, interacts with CHC1 in a Ran-stimulated manner. Interacts with XPO1. Interacts (via its C-terminal R domain) with SMAD2 (dephosphorylated form via its MH1 and MH2 domains); the interaction results in the nuclear export of SMAD2 and termination of the TGF-beta signaling. Interacts (via its C-terminal R domain) with SMAD3 (dephosphorylated form via its MH1 domain); the interaction results in the nuclear export of SMAD3 and termination of the TGF-beta signaling. Phosphorylation at Ser-58 promotes its import into the nucleus.

It localises to the cytoplasm. The protein resides in the nucleus. Acts as a cofactor for XPO1/CRM1-mediated nuclear export, perhaps as export complex scaffolding protein. Bound to XPO1/CRM1, stabilizes the XPO1/CRM1-cargo interaction. In the absence of Ran-bound GTP prevents binding of XPO1/CRM1 to the nuclear pore complex. Binds to CHC1/RCC1 and increases the guanine nucleotide exchange activity of CHC1/RCC1. Recruits XPO1/CRM1 to CHC1/RCC1 in a Ran-dependent manner. Negative regulator of TGF-beta signaling through interaction with the R-SMAD proteins, SMAD2 and SMAD3, and mediating their nuclear export. This Mus musculus (Mouse) protein is Ran-binding protein 3 (Ranbp3).